The sequence spans 475 residues: Glutamate--tRNA ligase 2 (475 aa).

The 'HIGH' region signature appears at 11–21; it reads PSPTGFLHIGG. The segment covering 116 to 133 has biased composition (basic and acidic residues); sequence AEGRPPRYDGTWRDKDPA. A disordered region spans residues 116 to 137; that stretch reads AEGRPPRYDGTWRDKDPAEAPS. The 'KMSKS' region motif lies at 240–244; it reads KLSKR. Lysine 243 is a binding site for ATP.

This sequence belongs to the class-I aminoacyl-tRNA synthetase family. Glutamate--tRNA ligase type 1 subfamily. Monomer.

It is found in the cytoplasm. The enzyme catalyses tRNA(Glu) + L-glutamate + ATP = L-glutamyl-tRNA(Glu) + AMP + diphosphate. Catalyzes the attachment of glutamate to tRNA(Glu) in a two-step reaction: glutamate is first activated by ATP to form Glu-AMP and then transferred to the acceptor end of tRNA(Glu). This chain is Glutamate--tRNA ligase 2, found in Chelativorans sp. (strain BNC1).